The chain runs to 514 residues: Na(+)/H(+) antiporter NhaB (514 aa).

12 consecutive transmembrane segments (helical) span residues 23–43 (LALLVFLIINPLTFFTNSFVA), 52–72 (IFTLAMALKCYPLLPGGLLAI), 97–117 (LLLMFMVAGIYFMKQLLLFIF), 120–140 (LLLSIRSKMVLSLAFCVAAAF), 144–164 (FLDALTVVAVVISVAVGFYGI), 202–222 (LMMHAGVGTALGGVMTMVGEP), 238–258 (FFLRMSPVTVPVLVCGLLTCM), 303–323 (AIIGVWLVTALALHLAEVGLI), 357–377 (LTVFFSIVAVIIDQHLFAPII), 391–411 (LFYLFNGLLSSISDNVFVGTI), 447–467 (ATPNGQAAFLFLLTSALAPLI), and 475–495 (VWMALPYTIILTLVGLLCVEF).

It belongs to the NhaB Na(+)/H(+) (TC 2.A.34) antiporter family.

It localises to the cell inner membrane. It carries out the reaction 2 Na(+)(in) + 3 H(+)(out) = 2 Na(+)(out) + 3 H(+)(in). Its function is as follows. Na(+)/H(+) antiporter that extrudes sodium in exchange for external protons. The chain is Na(+)/H(+) antiporter NhaB from Salmonella arizonae (strain ATCC BAA-731 / CDC346-86 / RSK2980).